Reading from the N-terminus, the 555-residue chain is Glucose-6-phosphate isomerase (555 aa).

Residue E353 is the Proton donor of the active site. Catalysis depends on residues H384 and K516.

It belongs to the GPI family.

Its subcellular location is the cytoplasm. It catalyses the reaction alpha-D-glucose 6-phosphate = beta-D-fructose 6-phosphate. It participates in carbohydrate biosynthesis; gluconeogenesis. It functions in the pathway carbohydrate degradation; glycolysis; D-glyceraldehyde 3-phosphate and glycerone phosphate from D-glucose: step 2/4. In terms of biological role, catalyzes the reversible isomerization of glucose-6-phosphate to fructose-6-phosphate. The chain is Glucose-6-phosphate isomerase from Methylobacillus flagellatus (strain ATCC 51484 / DSM 6875 / VKM B-1610 / KT).